The following is a 278-amino-acid chain: Hydroxyethylthiazole kinase (278 aa).

Methionine 48 contacts substrate. ATP is bound by residues arginine 124 and threonine 175. Glycine 202 contacts substrate.

Belongs to the Thz kinase family. Mg(2+) is required as a cofactor.

The catalysed reaction is 5-(2-hydroxyethyl)-4-methylthiazole + ATP = 4-methyl-5-(2-phosphooxyethyl)-thiazole + ADP + H(+). It functions in the pathway cofactor biosynthesis; thiamine diphosphate biosynthesis; 4-methyl-5-(2-phosphoethyl)-thiazole from 5-(2-hydroxyethyl)-4-methylthiazole: step 1/1. Functionally, catalyzes the phosphorylation of the hydroxyl group of 4-methyl-5-beta-hydroxyethylthiazole (THZ). The sequence is that of Hydroxyethylthiazole kinase from Clostridium botulinum (strain Eklund 17B / Type B).